A 467-amino-acid chain; its full sequence is Uronate isomerase (467 aa).

The protein belongs to the metallo-dependent hydrolases superfamily. Uronate isomerase family.

It catalyses the reaction D-glucuronate = D-fructuronate. The catalysed reaction is aldehydo-D-galacturonate = keto-D-tagaturonate. The protein operates within carbohydrate metabolism; pentose and glucuronate interconversion. In Histophilus somni (strain 2336) (Haemophilus somnus), this protein is Uronate isomerase.